The primary structure comprises 431 residues: Tol-Pal system protein TolB (431 aa).

A signal peptide spans Met1–Ala26. Residues Pro411–Gln431 are disordered.

This sequence belongs to the TolB family. As to quaternary structure, the Tol-Pal system is composed of five core proteins: the inner membrane proteins TolA, TolQ and TolR, the periplasmic protein TolB and the outer membrane protein Pal. They form a network linking the inner and outer membranes and the peptidoglycan layer.

Its subcellular location is the periplasm. Functionally, part of the Tol-Pal system, which plays a role in outer membrane invagination during cell division and is important for maintaining outer membrane integrity. The chain is Tol-Pal system protein TolB from Burkholderia ambifaria (strain MC40-6).